The following is a 557-amino-acid chain: Formate--tetrahydrofolate ligase 2 (557 aa).

66–73 (TPAGEGKT) contacts ATP.

The protein belongs to the formate--tetrahydrofolate ligase family.

The enzyme catalyses (6S)-5,6,7,8-tetrahydrofolate + formate + ATP = (6R)-10-formyltetrahydrofolate + ADP + phosphate. Its pathway is one-carbon metabolism; tetrahydrofolate interconversion. The polypeptide is Formate--tetrahydrofolate ligase 2 (Streptococcus pyogenes serotype M12 (strain MGAS9429)).